The following is a 551-amino-acid chain: ATP synthase subunit alpha (551 aa).

174–181 (GDRQTGKT) serves as a coordination point for ATP.

This sequence belongs to the ATPase alpha/beta chains family. As to quaternary structure, F-type ATPases have 2 components, CF(1) - the catalytic core - and CF(0) - the membrane proton channel. CF(1) has five subunits: alpha(3), beta(3), gamma(1), delta(1), epsilon(1). CF(0) has three main subunits: a(1), b(2) and c(9-12). The alpha and beta chains form an alternating ring which encloses part of the gamma chain. CF(1) is attached to CF(0) by a central stalk formed by the gamma and epsilon chains, while a peripheral stalk is formed by the delta and b chains.

The protein localises to the cell inner membrane. The enzyme catalyses ATP + H2O + 4 H(+)(in) = ADP + phosphate + 5 H(+)(out). Functionally, produces ATP from ADP in the presence of a proton gradient across the membrane. The alpha chain is a regulatory subunit. The sequence is that of ATP synthase subunit alpha from Salinibacter ruber (strain DSM 13855 / M31).